The primary structure comprises 102 residues: Large ribosomal subunit protein bL21 (102 aa).

Belongs to the bacterial ribosomal protein bL21 family. In terms of assembly, part of the 50S ribosomal subunit. Contacts protein L20.

Functionally, this protein binds to 23S rRNA in the presence of protein L20. The chain is Large ribosomal subunit protein bL21 from Nocardioides sp. (strain ATCC BAA-499 / JS614).